A 473-amino-acid polypeptide reads, in one-letter code: Glucose facilitated diffusion protein (473 aa).

Residues 1 to 13 (MSSESSQGLVTRL) lie on the Cytoplasmic side of the membrane. The chain crosses the membrane as a helical span at residues 14–34 (ALIAAIGGLLFGYDSAVIAAI). Residues 35–59 (GTPVDIHFIAPRHLSATAAASLSGM) are Periplasmic-facing. A helical membrane pass occupies residues 60 to 80 (VVVAVLVGCVTGSLLSGWIGI). The Cytoplasmic segment spans residues 81–85 (RFGRR). The helical transmembrane segment at 86–106 (GGLLMSSICFVAAGFGAALTE) threads the bilayer. The Periplasmic segment spans residues 107–112 (KLFGTG). Residues 113 to 133 (GSALQIFCFFRFLAGLGIGVV) traverse the membrane as a helical segment. At 134-158 (STLTPTYIAEIAPPDKRGQMVSGQQ) the chain is on the cytoplasmic side. A helical transmembrane segment spans residues 159-179 (MAIVTGALTGYIFTWLLAHFG). The Periplasmic segment spans residues 180–187 (SIDWVNAS). The helical transmembrane segment at 188–208 (GWCWSPASEGLIGIAFLLLLL) threads the bilayer. Topologically, residues 209-257 (TAPDTPHWLVMKGRHSEASKILARLEPQADPNLTIQKIKAGFDKAMDKS) are cytoplasmic. Residues 258-278 (SAGLFAFGITVVFAGVSVAAF) traverse the membrane as a helical segment. Residues 279–303 (QQLVGINAVLYYAPQMFQNLGFGAD) lie on the Periplasmic side of the membrane. A helical membrane pass occupies residues 304–324 (TALLQTISIGVVNFIFTMIAS). Topologically, residues 325-335 (RVVDRFGRKPL) are cytoplasmic. Residues 336–356 (LIWGALGMAAMMAVLGCCFWF) form a helical membrane-spanning segment. Topologically, residues 357–366 (KVGGVLPLAS) are periplasmic. The helical transmembrane segment at 367 to 387 (VLLYIAVFGMSWGPVCWVVLS) threads the bilayer. The Cytoplasmic segment spans residues 388–396 (EMFPSSIKG). A helical membrane pass occupies residues 397–417 (AAMPIAVTGQWLANILVNFLF). The Periplasmic segment spans residues 418 to 429 (KVADGSPALNQT). Residues 430–450 (FNHGFSYLVFAALSILGGLIV) traverse the membrane as a helical segment. The Cytoplasmic segment spans residues 451-473 (ARFVPETKGRSLDEIEEMWRSQK).

Belongs to the major facilitator superfamily. Sugar transporter (TC 2.A.1.1) family.

The protein localises to the cell inner membrane. In terms of biological role, allows uptake of glucose by the cell; allows growth on glucose minimal medium by E.coli cells impaired in glucose transport. Also transports fructose, but has a strong preference for glucose. This is Glucose facilitated diffusion protein from Zymomonas mobilis subsp. mobilis (strain ATCC 31821 / ZM4 / CP4).